The following is a 418-amino-acid chain: Putative ion-transport protein YfeO (418 aa).

12 consecutive transmembrane segments (helical) span residues 10-30 (LLLS…LIMV), 54-74 (DSPL…GLVI), 99-119 (ALPG…SLGP), 120-140 (EHPI…RLLP), 149-169 (ILAS…AALI), 186-206 (LFAP…FFHP), 223-243 (ILSG…AVWC), 258-278 (VFVL…GGPV), 300-320 (DYFL…ASGF), 322-342 (GGRI…LHEH), 343-363 (VPAV…VLVV), and 371-391 (LFMA…CIVM).

It belongs to the chloride channel (TC 2.A.49) family.

Its subcellular location is the cell membrane. The protein is Putative ion-transport protein YfeO of Escherichia coli O127:H6 (strain E2348/69 / EPEC).